Reading from the N-terminus, the 963-residue chain is Exportin-T (963 aa).

N-acetylmethionine is present on M1. Position 635 is an N6-acetyllysine (K635).

It belongs to the exportin family. Found in a complex with XPOT, Ran and tRNA. Probably found in a complex with nucleoporins. Interacts with Ran and tRNA in a GTP-dependent manner.

It is found in the nucleus. It localises to the cytoplasm. Mediates the nuclear export of aminoacylated tRNAs. In the nucleus binds to tRNA and to the GTPase Ran in its active GTP-bound form. Docking of this trimeric complex to the nuclear pore complex (NPC) is mediated through binding to nucleoporins. Upon transit of a nuclear export complex into the cytoplasm, disassembling of the complex and hydrolysis of Ran-GTP to Ran-GDP (induced by RANBP1 and RANGAP1, respectively) cause release of the tRNA from the export receptor. XPOT then return to the nuclear compartment and mediate another round of transport. The directionality of nuclear export is thought to be conferred by an asymmetric distribution of the GTP- and GDP-bound forms of Ran between the cytoplasm and nucleus. This Mus musculus (Mouse) protein is Exportin-T (Xpot).